Consider the following 155-residue polypeptide: Protein FAM162A (155 aa).

Residues 77–103 (RFKKEEEIPETISFEMLDAAKNKIRVK) form a required for proapoptotic activity region. Residues 102 to 121 (VKVSYLMIALTVAGCVYMVI) traverse the membrane as a helical segment.

Belongs to the UPF0389 family. Interacts with HSP90AB1; HSP90AB1 is essential for FAM162A mitochondrial localization and pro-apoptotic activity. Interacts with VDAC2; the interaction is probably involved in inducing mitochondrial permeability transition.

The protein resides in the mitochondrion membrane. Its function is as follows. Proposed to be involved in regulation of apoptosis; the exact mechanism may differ between cell types/tissues. May be involved in hypoxia-induced cell death of transformed cells implicating cytochrome C release and caspase activation (such as CASP9) and inducing mitochondrial permeability transition. May be involved in hypoxia-induced cell death of neuronal cells probably by promoting release of AIFM1 from mitochondria to cytoplasm and its translocation to the nucleus; however, the involvement of caspases has been reported conflictingly. The protein is Protein FAM162A (Fam162a) of Rattus norvegicus (Rat).